The sequence spans 366 residues: 3-dehydroquinate synthase (366 aa).

Residues 73–78 (DGERAK), 107–111 (GVVGD), 131–132 (TT), Lys144, and Lys153 contribute to the NAD(+) site. 3 residues coordinate Zn(2+): Glu186, His249, and His266.

This sequence belongs to the sugar phosphate cyclases superfamily. Dehydroquinate synthase family. Co(2+) serves as cofactor. The cofactor is Zn(2+). Requires NAD(+) as cofactor.

The protein localises to the cytoplasm. It carries out the reaction 7-phospho-2-dehydro-3-deoxy-D-arabino-heptonate = 3-dehydroquinate + phosphate. Its pathway is metabolic intermediate biosynthesis; chorismate biosynthesis; chorismate from D-erythrose 4-phosphate and phosphoenolpyruvate: step 2/7. Catalyzes the conversion of 3-deoxy-D-arabino-heptulosonate 7-phosphate (DAHP) to dehydroquinate (DHQ). The sequence is that of 3-dehydroquinate synthase from Koribacter versatilis (strain Ellin345).